We begin with the raw amino-acid sequence, 490 residues long: Aspartyl/glutamyl-tRNA(Asn/Gln) amidotransferase subunit B (490 aa).

This sequence belongs to the GatB/GatE family. GatB subfamily. In terms of assembly, heterotrimer of A, B and C subunits.

The catalysed reaction is L-glutamyl-tRNA(Gln) + L-glutamine + ATP + H2O = L-glutaminyl-tRNA(Gln) + L-glutamate + ADP + phosphate + H(+). It carries out the reaction L-aspartyl-tRNA(Asn) + L-glutamine + ATP + H2O = L-asparaginyl-tRNA(Asn) + L-glutamate + ADP + phosphate + 2 H(+). Functionally, allows the formation of correctly charged Asn-tRNA(Asn) or Gln-tRNA(Gln) through the transamidation of misacylated Asp-tRNA(Asn) or Glu-tRNA(Gln) in organisms which lack either or both of asparaginyl-tRNA or glutaminyl-tRNA synthetases. The reaction takes place in the presence of glutamine and ATP through an activated phospho-Asp-tRNA(Asn) or phospho-Glu-tRNA(Gln). This chain is Aspartyl/glutamyl-tRNA(Asn/Gln) amidotransferase subunit B, found in Methylobacterium nodulans (strain LMG 21967 / CNCM I-2342 / ORS 2060).